Reading from the N-terminus, the 246-residue chain is Alpha-tubulin N-acetyltransferase (246 aa).

The N-acetyltransferase domain occupies 21 to 202 (LTLVPDGVSR…NNFVVFHSFF (182 aa)). Acetyl-CoA-binding positions include 135 to 148 (FYVD…GYGK) and 172 to 181 (SNKLLGFLRK).

This sequence belongs to the acetyltransferase ATAT1 family.

It carries out the reaction L-lysyl-[alpha-tubulin] + acetyl-CoA = N(6)-acetyl-L-lysyl-[alpha-tubulin] + CoA + H(+). Specifically acetylates 'Lys-40' in alpha-tubulin on the lumenal side of microtubules. Promotes microtubule destabilization and accelerates microtubule dynamics; this activity may be independent of acetylation activity. Acetylates alpha-tubulin with a slow enzymatic rate, due to a catalytic site that is not optimized for acetyl transfer. Enters the microtubule through each end and diffuses quickly throughout the lumen of microtubules. Acetylates only long/old microtubules because of its slow acetylation rate since it does not have time to act on dynamically unstable microtubules before the enzyme is released. The sequence is that of Alpha-tubulin N-acetyltransferase from Leishmania infantum.